The sequence spans 436 residues: Protein PhoH2 (436 aa).

A PINc domain is found at 12-137 (RTYVLDTSVL…LVSKDLPMRL (126 aa)).

This sequence in the N-terminal section; belongs to the PINc/VapC protein family. In the C-terminal section; belongs to the PhoH family.

The catalysed reaction is n ATP + n H2O + wound RNA = n ADP + n phosphate + unwound RNA.. It carries out the reaction ATP + H2O = ADP + phosphate + H(+). The enzyme catalyses GTP + H2O = GDP + phosphate + H(+). In terms of biological role, unwinds and/or cleaves 5'-tailed RNA in vitro, the reaction is maximal with hydrolyzable ATP; double-stranded (ds)RNA and dsDNA are not unwound. Unlike the protein in mycobacteria there does not seem to be an antitoxin gene upstream, suggesting this is not a toxin-antitoxin system. Has ATPase and GTPase activities. This is Protein PhoH2 from Thermobispora bispora (strain ATCC 19993 / DSM 43833 / CBS 139.67 / JCM 10125 / KCTC 9307 / NBRC 14880 / R51).